We begin with the raw amino-acid sequence, 102 residues long: Acid shock protein (102 aa).

A signal peptide spans 1–21 (MKKVLALVVAAAMGLSSAAFA). The span at 22–41 (AETATTPAPTATTTKAAPAK) shows a compositional bias: low complexity. Positions 22–58 (AETATTPAPTATTTKAAPAKTTHHKKQHKAAPAQKAQ) are excised as a propeptide. Residues 22 to 102 (AETATTPAPT…PAKPAAQPAA (81 aa)) form a disordered region. Residues 80–90 (AAKKHAKKHSH) show a composition bias toward basic residues. The span at 91–102 (QQPAKPAAQPAA) shows a compositional bias: low complexity.

The protein belongs to the Asr family. In terms of processing, proteolytic processing gives rise to the active protein.

The protein localises to the periplasm. Its function is as follows. Required for growth and/or survival at acidic conditions. The protein is Acid shock protein of Escherichia coli O45:K1 (strain S88 / ExPEC).